The primary structure comprises 593 residues: Translation initiation factor IF-2 (593 aa).

Positions 101–270 (LRPPVVTIMG…LLIAELEDLR (170 aa)) constitute a tr-type G domain. The segment at 110–117 (GHVDHGKT) is G1. 110–117 (GHVDHGKT) contributes to the GTP binding site. The G2 stretch occupies residues 135 to 139 (GITQH). Positions 156 to 159 (DTPG) are G3. GTP is bound by residues 156 to 160 (DTPGH) and 210 to 213 (NKMD). The tract at residues 210–213 (NKMD) is G4. Positions 246–248 (SAR) are G5.

Belongs to the TRAFAC class translation factor GTPase superfamily. Classic translation factor GTPase family. IF-2 subfamily.

The protein localises to the cytoplasm. Its function is as follows. One of the essential components for the initiation of protein synthesis. Protects formylmethionyl-tRNA from spontaneous hydrolysis and promotes its binding to the 30S ribosomal subunits. Also involved in the hydrolysis of GTP during the formation of the 70S ribosomal complex. The protein is Translation initiation factor IF-2 of Dehalococcoides mccartyi (strain CBDB1).